We begin with the raw amino-acid sequence, 121 residues long: Small ribosomal subunit protein bS6m (121 aa).

The protein belongs to the bacterial ribosomal protein bS6 family. As to quaternary structure, component of the mitochondrial ribosome small subunit (28S) which comprises a 12S rRNA and about 30 distinct proteins.

The protein resides in the mitochondrion. The polypeptide is Small ribosomal subunit protein bS6m (MRPS6) (Gallus gallus (Chicken)).